Reading from the N-terminus, the 70-residue chain is Movement protein TGBp3 (70 aa).

At 1–4 (MFPR) the chain is on the lumenal side. A helical membrane pass occupies residues 5-25 (SGLGLAVAAAVVAYLVLLLAQ). Topologically, residues 26 to 70 (QLYMSNSSQCTIVITGESVSVVGCVYSEAFIELVKGLKPYYHPLG) are cytoplasmic.

Belongs to the Tymovirales TGBp3 protein family.

It localises to the host endoplasmic reticulum membrane. In terms of biological role, plays a role in viral cell-to-cell propagation, by facilitating genome transport to neighboring plant cells through plasmosdesmata. May induce the formation of granular vesicles derived from the Endoplasmic reticulum, which align on actin filaments. The protein is Movement protein TGBp3 of Crataegus (hawthorn).